We begin with the raw amino-acid sequence, 588 residues long: L-fucose isomerase (588 aa).

Catalysis depends on proton acceptor residues Glu335 and Asp359. Positions 335, 359, and 525 each coordinate Mn(2+).

This sequence belongs to the L-fucose isomerase family. Mn(2+) serves as cofactor.

It is found in the cytoplasm. The catalysed reaction is L-fucose = L-fuculose. The protein operates within carbohydrate degradation; L-fucose degradation; L-lactaldehyde and glycerone phosphate from L-fucose: step 1/3. In terms of biological role, converts the aldose L-fucose into the corresponding ketose L-fuculose. This is L-fucose isomerase from Streptococcus pneumoniae serotype 2 (strain D39 / NCTC 7466).